The chain runs to 318 residues: V-set and immunoglobulin domain-containing protein 1 (318 aa).

The N-terminal stretch at 1–19 (MSFLLFITLGLSLTALSHC) is a signal peptide. The Ig-like V-type domain maps to 20–131 (VQVTIQNPII…SSGQGKILLT (112 aa)). Residues 20 to 233 (VQVTIQNPII…TGGEGGVIAA (214 aa)) are Extracellular-facing. Intrachain disulfides connect Cys-41-Cys-114 and Cys-157-Cys-207. Residues 136–223 (PSVPHCSIRG…GNATCELNLH (88 aa)) enclose the Ig-like C2-type domain. Residues 234–254 (AVIGGLLAAAIIIAIVWFLVV) traverse the membrane as a helical segment. Over 255–318 (KRKQKKQLPP…ANGETEEPTA (64 aa)) the chain is Cytoplasmic. A disordered region spans residues 261 to 318 (QLPPTKEMKTGGNQYMAVSGEANEPPKENLGASEPTETIQFHDHAENAANGETEEPTA).

In terms of tissue distribution, expressed in thymocytes.

It localises to the membrane. In Xenopus laevis (African clawed frog), this protein is V-set and immunoglobulin domain-containing protein 1 (vsig1).